Here is an 81-residue protein sequence, read N- to C-terminus: Large ribosomal subunit protein eL31 (81 aa).

This sequence belongs to the eukaryotic ribosomal protein eL31 family.

In Methanothermobacter thermautotrophicus (strain ATCC 29096 / DSM 1053 / JCM 10044 / NBRC 100330 / Delta H) (Methanobacterium thermoautotrophicum), this protein is Large ribosomal subunit protein eL31 (rpl31e).